Here is a 393-residue protein sequence, read N- to C-terminus: Lipid-A-disaccharide synthase (393 aa).

The protein belongs to the LpxB family.

It carries out the reaction a lipid X + a UDP-2-N,3-O-bis[(3R)-3-hydroxyacyl]-alpha-D-glucosamine = a lipid A disaccharide + UDP + H(+). It functions in the pathway bacterial outer membrane biogenesis; LPS lipid A biosynthesis. In terms of biological role, condensation of UDP-2,3-diacylglucosamine and 2,3-diacylglucosamine-1-phosphate to form lipid A disaccharide, a precursor of lipid A, a phosphorylated glycolipid that anchors the lipopolysaccharide to the outer membrane of the cell. The chain is Lipid-A-disaccharide synthase from Actinobacillus pleuropneumoniae serotype 5b (strain L20).